The primary structure comprises 316 residues: Acetylglutamate kinase (316 aa).

Residues 76-77, R98, and N207 each bind substrate; that span reads GG.

This sequence belongs to the acetylglutamate kinase family. ArgB subfamily.

It localises to the cytoplasm. The enzyme catalyses N-acetyl-L-glutamate + ATP = N-acetyl-L-glutamyl 5-phosphate + ADP. The protein operates within amino-acid biosynthesis; L-arginine biosynthesis; N(2)-acetyl-L-ornithine from L-glutamate: step 2/4. Functionally, catalyzes the ATP-dependent phosphorylation of N-acetyl-L-glutamate. The chain is Acetylglutamate kinase from Paenarthrobacter aurescens (strain TC1).